Reading from the N-terminus, the 578-residue chain is 2-succinyl-5-enolpyruvyl-6-hydroxy-3-cyclohexene-1-carboxylate synthase (578 aa).

Residues 186–208 (LPAAGGEHHPAEPRSTPWDGPVP) are disordered.

Belongs to the TPP enzyme family. MenD subfamily. Homodimer. It depends on Mg(2+) as a cofactor. Mn(2+) is required as a cofactor. Thiamine diphosphate serves as cofactor.

It carries out the reaction isochorismate + 2-oxoglutarate + H(+) = 5-enolpyruvoyl-6-hydroxy-2-succinyl-cyclohex-3-ene-1-carboxylate + CO2. It functions in the pathway quinol/quinone metabolism; 1,4-dihydroxy-2-naphthoate biosynthesis; 1,4-dihydroxy-2-naphthoate from chorismate: step 2/7. Its pathway is cofactor biosynthesis; phylloquinone biosynthesis. Catalyzes the thiamine diphosphate-dependent decarboxylation of 2-oxoglutarate and the subsequent addition of the resulting succinic semialdehyde-thiamine pyrophosphate anion to isochorismate to yield 2-succinyl-5-enolpyruvyl-6-hydroxy-3-cyclohexene-1-carboxylate (SEPHCHC). This is 2-succinyl-5-enolpyruvyl-6-hydroxy-3-cyclohexene-1-carboxylate synthase from Synechococcus sp. (strain WH7803).